Here is a 335-residue protein sequence, read N- to C-terminus: Tetraacyldisaccharide 4'-kinase (335 aa).

58 to 65 serves as a coordination point for ATP; it reads TAGGSGKT.

It belongs to the LpxK family.

The catalysed reaction is a lipid A disaccharide + ATP = a lipid IVA + ADP + H(+). It functions in the pathway glycolipid biosynthesis; lipid IV(A) biosynthesis; lipid IV(A) from (3R)-3-hydroxytetradecanoyl-[acyl-carrier-protein] and UDP-N-acetyl-alpha-D-glucosamine: step 6/6. In terms of biological role, transfers the gamma-phosphate of ATP to the 4'-position of a tetraacyldisaccharide 1-phosphate intermediate (termed DS-1-P) to form tetraacyldisaccharide 1,4'-bis-phosphate (lipid IVA). The chain is Tetraacyldisaccharide 4'-kinase from Shewanella frigidimarina (strain NCIMB 400).